Consider the following 695-residue polypeptide: Phosphate acetyltransferase (695 aa).

The phosphate acetyltransferase stretch occupies residues 372–695 (AFRYRLVKRA…LTAVQAASQR (324 aa)).

In the N-terminal section; belongs to the CobB/CobQ family. The protein in the C-terminal section; belongs to the phosphate acetyltransferase and butyryltransferase family. As to quaternary structure, homohexamer.

It is found in the cytoplasm. The enzyme catalyses acetyl-CoA + phosphate = acetyl phosphate + CoA. The protein operates within metabolic intermediate biosynthesis; acetyl-CoA biosynthesis; acetyl-CoA from acetate: step 2/2. In terms of biological role, involved in acetate metabolism. The protein is Phosphate acetyltransferase (pta) of Nitrosomonas europaea (strain ATCC 19718 / CIP 103999 / KCTC 2705 / NBRC 14298).